We begin with the raw amino-acid sequence, 784 residues long: Kinesin-like protein Klp68D (784 aa).

The region spanning 19-344 is the Kinesin motor domain; that stretch reads CVQVVVRCRP…LRYASRAKSI (326 aa). 106–113 is an ATP binding site; the sequence is GQTGTGKT. Residues 351 to 385 are a coiled coil; sequence NEDPQDAKLKEYQEEIERLKRLIGPQQQQRSEKQV. Disordered stretches follow at residues 371–449, 605–652, and 742–784; these read RLIG…ERER, KFSS…PSSL, and IKSS…LVNK. Basic residues predominate over residues 386 to 396; that stretch reads TAKKQRVKKPK. Over residues 416–428 the composition is skewed to acidic residues; it reads PVEDDSDPEGAES. Positions 426–582 form a coiled coil; the sequence is AESESDKENE…KRQLLIIDNF (157 aa). Residues 429–449 show a composition bias toward basic and acidic residues; that stretch reads ESDKENEAEVAKSNEELERER. The segment covering 622–634 has biased composition (basic residues); sequence SSKRPVSHPQRRR. Low complexity predominate over residues 769–778; it reads KKPASAYPKA.

This sequence belongs to the TRAFAC class myosin-kinesin ATPase superfamily. Kinesin family. Kinesin II subfamily. In terms of tissue distribution, expressed primarily in the central nervous system and in a subset of the peripheral nervous system during embryogenesis.

The protein localises to the cytoplasm. It localises to the cytoskeleton. Functionally, plus-end directed microtubule motor that may be used for anterograde axonal transport and could conceivably move cargos in fly neurons different than those moved by kinesin heavy chain or other plus-end directed motors. The polypeptide is Kinesin-like protein Klp68D (Klp68D) (Drosophila melanogaster (Fruit fly)).